Here is a 308-residue protein sequence, read N- to C-terminus: F420-non-reducing hydrogenase subunit G (308 aa).

This sequence belongs to the [NiFe]/[NiFeSe] hydrogenase small subunit family. The F420-non-reducing hydrogenase is composed of three subunits; MvhA, MvhD and MvhG. It forms a complex with the heterodisulfide reductase (hdr).

In terms of biological role, part of a complex that provides reducing equivalents for heterodisulfide reductase. The chain is F420-non-reducing hydrogenase subunit G (mvhG) from Methanothermobacter marburgensis (strain ATCC BAA-927 / DSM 2133 / JCM 14651 / NBRC 100331 / OCM 82 / Marburg) (Methanobacterium thermoautotrophicum).